The following is a 466-amino-acid chain: Asparagine--tRNA ligase (466 aa).

The protein belongs to the class-II aminoacyl-tRNA synthetase family. As to quaternary structure, homodimer.

Its subcellular location is the cytoplasm. The catalysed reaction is tRNA(Asn) + L-asparagine + ATP = L-asparaginyl-tRNA(Asn) + AMP + diphosphate + H(+). In Psychromonas ingrahamii (strain DSM 17664 / CCUG 51855 / 37), this protein is Asparagine--tRNA ligase.